Consider the following 346-residue polypeptide: Flap endonuclease 1 (346 aa).

The N-domain stretch occupies residues 1–100 (MGVDIKELVE…KELERRYQIK (100 aa)). 7 residues coordinate Mg(2+): D29, D82, E154, E156, D175, D177, and D238. Residues 118–260 (EARIYAQQTS…KALKLVKELK (143 aa)) are I-domain. The interval 336 to 344 (KQQSLESWF) is interaction with PCNA.

It belongs to the XPG/RAD2 endonuclease family. FEN1 subfamily. In terms of assembly, interacts with PCNA. PCNA stimulates the nuclease activity without altering cleavage specificity. It depends on Mg(2+) as a cofactor.

In terms of biological role, structure-specific nuclease with 5'-flap endonuclease and 5'-3' exonuclease activities involved in DNA replication and repair. During DNA replication, cleaves the 5'-overhanging flap structure that is generated by displacement synthesis when DNA polymerase encounters the 5'-end of a downstream Okazaki fragment. Binds the unpaired 3'-DNA end and kinks the DNA to facilitate 5' cleavage specificity. Cleaves one nucleotide into the double-stranded DNA from the junction in flap DNA, leaving a nick for ligation. Also involved in the base excision repair (BER) pathway. Acts as a genome stabilization factor that prevents flaps from equilibrating into structures that lead to duplications and deletions. Also possesses 5'-3' exonuclease activity on nicked or gapped double-stranded DNA. This is Flap endonuclease 1 from Thermofilum pendens (strain DSM 2475 / Hrk 5).